A 469-amino-acid polypeptide reads, in one-letter code: Sorting and assembly machinery component 50 homolog (469 aa).

The disordered stretch occupies residues 1–20 (MGTVHARSLEPLPSSGPDFG). The POTRA domain occupies 45-125 (VVVQHVHFDG…LDVTFEVTEL (81 aa)). K255 is subject to N6-methyllysine.

The protein belongs to the SAM50/omp85 family. As to quaternary structure, associates with the mitochondrial contact site and cristae organizing system (MICOS) complex, composed of at least MICOS10/MIC10, CHCHD3/MIC19, CHCHD6/MIC25, APOOL/MIC27, IMMT/MIC60, APOO/MIC23/MIC26 and QIL1/MIC13. This complex was also known under the names MINOS or MitOS complex. The MICOS complex associates with mitochondrial outer membrane proteins SAMM50, MTX1 and MTX2 (together described as components of the mitochondrial outer membrane sorting assembly machinery (SAM) complex) and DNAJC11, mitochondrial inner membrane protein TMEM11 and with HSPA9. The MICOS and SAM complexes together with DNAJC11 are part of a large protein complex spanning both membranes termed the mitochondrial intermembrane space bridging (MIB) complex. Interacts with CHCHD3/MIC19. Interacts with ARMC1. In terms of assembly, (Microbial infection) Interacts with parasite T.gondii RH strain MAF1b1; the interaction is probably indirect and results in the disruption of the MIB complex and the formation of SPOTs (structures positive for outer mitochondrial membrane (OMM)), a cellular response to OMM stress, which leads to the constitutive shedding of OMM vesicles.

It is found in the mitochondrion outer membrane. The protein resides in the cytoplasm. The protein localises to the mitochondrion. Plays a crucial role in the maintenance of the structure of mitochondrial cristae and the proper assembly of the mitochondrial respiratory chain complexes. Required for the assembly of TOMM40 into the TOM complex. This Homo sapiens (Human) protein is Sorting and assembly machinery component 50 homolog (SAMM50).